A 61-amino-acid chain; its full sequence is Small ribosomal subunit protein uS14 (61 aa).

The Zn(2+) site is built by cysteine 24, cysteine 27, cysteine 40, and cysteine 43.

The protein belongs to the universal ribosomal protein uS14 family. Zinc-binding uS14 subfamily. In terms of assembly, part of the 30S ribosomal subunit. Contacts proteins S3 and S10. Zn(2+) is required as a cofactor.

In terms of biological role, binds 16S rRNA, required for the assembly of 30S particles and may also be responsible for determining the conformation of the 16S rRNA at the A site. In Chloroflexus aurantiacus (strain ATCC 29364 / DSM 637 / Y-400-fl), this protein is Small ribosomal subunit protein uS14.